Consider the following 359-residue polypeptide: MTESNEDLFGIASHFALEGAVTGIEPYGDGHINTTYLVTTDGPRYILQQMNTSIFPDTVNLMRNVELVTSTLKAQGKETLDIVPTTSGATWAEIDGGAWRVYKFIEHTVSYNLVPNPDVFREAGSAFGDFQNFLSEFDASQLTETIAHFHDTPHRFEDFKAALAADKLGRAAACQPEIDFYLSHADQYAVVMDGLRDGSIPLRVTHNDTKLNNILMDATTGKARAIIDLDTIMPGSMLFDFGDSIRFGASTALEDEKDLSKVHFSTELFRAYTEGFVGELRGSITAREAELLPFSGNLLTMECGMRFLADYLEGDIYFATKYPEHNLVRTRTQIKLVQEMEQKASETRAIVADIMEAAR.

The 339-residue stretch at 21–359 folds into the Protein kinase domain; sequence VTGIEPYGDG…IVADIMEAAR (339 aa).

It belongs to the protein kinase superfamily. Mg(2+) serves as cofactor.

It carries out the reaction N-acetyl-D-hexosamine + ATP = N-acetyl-alpha-D-hexosamine 1-phosphate + ADP + H(+). Functionally, phosphorylates both N-acetylglucosamine (GlcNAc) and N-acetylgalactosamine (GalNAc) at similar rates. Involved in the lacto-N-biose I/galacto-N-biose (LNB/GNB) degradation pathway, which is important for host intestinal colonization by bifidobacteria. Also accepts GTP and ITP as phosphate donors. In vitro, can phosphorylate several GlcNAc and GalNAc derivatives. The protein is N-acetylhexosamine 1-kinase (nahK) of Bifidobacterium longum subsp. longum (strain ATCC 15707 / DSM 20219 / JCM 1217 / NCTC 11818 / E194b).